A 931-amino-acid chain; its full sequence is Adhesion G protein-coupled receptor E1 (931 aa).

The N-terminal stretch at 1-27 is a signal peptide; it reads MWGFWLLLFWGFSGMYRWGMTTLPTLG. Topologically, residues 28-644 are extracellular; it reads QTLGGVNECQ…IMASGELTME (617 aa). EGF-like domains follow at residues 32–80 and 81–132; these read GVNE…VECQ and DVNE…FLCA. Cystine bridges form between cysteine 36/cysteine 48, cysteine 42/cysteine 57, cysteine 59/cysteine 79, cysteine 85/cysteine 98, cysteine 92/cysteine 107, cysteine 109/cysteine 131, cysteine 137/cysteine 149, cysteine 143/cysteine 158, cysteine 160/cysteine 171, cysteine 177/cysteine 189, cysteine 183/cysteine 198, cysteine 200/cysteine 220, cysteine 226/cysteine 239, cysteine 233/cysteine 248, cysteine 250/cysteine 270, cysteine 276/cysteine 286, cysteine 280/cysteine 295, cysteine 297/cysteine 317, cysteine 323/cysteine 336, cysteine 330/cysteine 345, and cysteine 347/cysteine 366. One can recognise an EGF-like 3; calcium-binding domain in the interval 133 to 172; that stretch reads DVDECLTIGICPKYSNCSNSVGSYSCTCQPGFVLNGSICE. N-linked (GlcNAc...) asparagine glycans are attached at residues asparagine 148 and asparagine 167. The EGF-like 4; calcium-binding domain maps to 173-221; that stretch reads DEDECVTRDVCPEHATCHNTLGSYYCTCNSGLESSGGGPMFQGLDESCE. Residues 222 to 271 enclose the EGF-like 5; calcium-binding domain; that stretch reads DVDECSRNSTLCGPTFICINTLGSYSCSCPAGFSLPTFQILGHPADGNCT. Asparagine 229 carries an N-linked (GlcNAc...) asparagine glycan. Residues asparagine 269 and asparagine 283 are each glycosylated (N-linked (GlcNAc...) asparagine). The 47-residue stretch at 272–318 folds into the EGF-like 6; calcium-binding domain; it reads DIDECDDTCPLNSSCTNTIGSYFCTCHPGFASSNGQLNFKDLEVTCE. An EGF-like 7; calcium-binding domain is found at 319–367; that stretch reads DIDECTQDPLQCGLNSVCTNVPGSYICGCLPDFQMDPEGSQGYGNFNCK. Asparagine 405, asparagine 417, asparagine 474, and asparagine 498 each carry an N-linked (GlcNAc...) asparagine glycan. Residues 482 to 642 form the GAIN-B domain; sequence EYLDIESKVI…AIIMASGELT (161 aa). Residues 506–508 carry the Cell attachment site motif; that stretch reads RGD. 2 disulfides stabilise this stretch: cysteine 595–cysteine 624 and cysteine 612–cysteine 626. Residues 595–642 form a GPS region; sequence CVSWNTDVEDGRWTPSGCEIVEASETHTVCSCNRMANLAIIMASGELT. A helical membrane pass occupies residues 645 to 672; it reads FSLYIISHVGTVISLVCLALAIATFLLC. Topologically, residues 673 to 679 are cytoplasmic; sequence RAVQNHN. Residues 680-701 form a helical membrane-spanning segment; it reads TYMHLHLCVCLFLAKILFLTGI. The Extracellular portion of the chain corresponds to 702–711; that stretch reads DKTDNQTACA. The N-linked (GlcNAc...) asparagine glycan is linked to asparagine 706. Residues 712-735 form a helical membrane-spanning segment; that stretch reads IIAGFLHYLFLACFFWMLVEAVML. Residues 736–754 lie on the Cytoplasmic side of the membrane; it reads FLMVRNLKVVNYFSSRNIK. The chain crosses the membrane as a helical span at residues 755–776; that stretch reads MLHLCAFGYGLPVLVVIISASV. Topologically, residues 777 to 792 are extracellular; the sequence is QPRGYGMHNRCWLNTE. Residues 793-821 traverse the membrane as a helical segment; it reads TGFIWSFLGPVCMIITINSVLLAWTLWVL. At 822-839 the chain is on the cytoplasmic side; it reads RQKLCSVSSEVSKLKDTR. A helical transmembrane segment spans residues 840–859; the sequence is LLTFKAIAQIFILGCSWVLG. Residues 860 to 874 are Extracellular-facing; sequence IFQIGPLASIMAYLF. The chain crosses the membrane as a helical span at residues 875–897; the sequence is TIINSLQGAFIFLIHCLLNRQVR. Over 898-931 the chain is Cytoplasmic; that stretch reads DEYKKLLTRKTDLSSHSQTSGILLSSMPSTSKMG.

This sequence belongs to the G-protein coupled receptor 2 family. Adhesion G-protein coupled receptor (ADGR) subfamily. In macrophages; but absent from those which are localized within T-cell areas of lymph nodes and spleen. Low level of expression on blood monocytes.

Its subcellular location is the cell membrane. Its function is as follows. Orphan receptor involved in cell adhesion and probably in cell-cell interactions specifically involving cells of the immune system. May play a role in regulatory T-cells (Treg) development. The polypeptide is Adhesion G protein-coupled receptor E1 (Adgre1) (Mus musculus (Mouse)).